A 352-amino-acid chain; its full sequence is C-C chemokine receptor type 5 (352 aa).

Topologically, residues 1–30 (MDYQVSSPIYDINYYTSEPCQKINVKQIAA) are extracellular. A Sulfotyrosine modification is found at Y3. S6 and S7 each carry an O-linked (GalNAc...) serine glycan. 3 positions are modified to sulfotyrosine: Y10, Y14, and Y15. 2 cysteine pairs are disulfide-bonded: C20–C269 and C101–C178. A helical transmembrane segment spans residues 31–58 (RLLPPLYSLVFIFGFVGNMLVILILINC). At 59–68 (KRLKSMTDIY) the chain is on the cytoplasmic side. The chain crosses the membrane as a helical span at residues 69 to 89 (LLNLAISDLFFLLTVPFWAHY). At 90–102 (AAAQWDFGNTMCQ) the chain is on the extracellular side. The helical transmembrane segment at 103 to 124 (LLTGLYFIGFFSGIFFIILLTI) threads the bilayer. Residues 125-141 (DRYLAVVHAVFALKART) are Cytoplasmic-facing. The chain crosses the membrane as a helical span at residues 142–166 (VTFGVVTSVITWVVAVFASLPGIIF). Residues 167 to 198 (TRSQKEGLHYTCSSHFPYSQYQFWKNFQTLKI) lie on the Extracellular side of the membrane. The chain crosses the membrane as a helical span at residues 199–218 (VILGLVLPLLVMVICYSGIL). The Cytoplasmic segment spans residues 219 to 235 (KTLLRCRNEKKRHRAVR). The helical transmembrane segment at 236–260 (LIFTIMIVYFLFWAPYNIVLLLNTF) threads the bilayer. The Extracellular portion of the chain corresponds to 261-277 (QEFFGLNNCSSSNRLDQ). The chain crosses the membrane as a helical span at residues 278–301 (AMQVTETLGMTHCCINPIIYAFVG). The Cytoplasmic portion of the chain corresponds to 302-352 (EKFRNYLLVFFQKHIAKRFCKCCSIFQQEAPERASSVYTRSTGEQEISVGL). 3 S-palmitoyl cysteine lipidation sites follow: C321, C323, and C324. Residues S336, S337, S342, and S349 each carry the phosphoserine; by BARK1 modification.

It belongs to the G-protein coupled receptor 1 family. In terms of assembly, interacts with PRAF2. Efficient ligand binding to CCL3/MIP-1alpha and CCL4/MIP-1beta requires sulfation, O-glycosylation and sialic acid modifications. Glycosylation on Ser-6 is required for efficient binding of CCL4. Interacts with GRK2. Interacts with ARRB1 and ARRB2. Interacts with CNIH4. Interacts with S100A4; this interaction stimulates T-lymphocyte chemotaxis. (Microbial infection) Interacts with HIV-1 surface protein gp120. As to quaternary structure, (Microbial infection) May interact with human cytomegalovirus/HHV-5 protein UL78. Sulfated on at least 2 of the N-terminal tyrosines. Sulfation contributes to the efficiency of HIV-1 entry and is required for efficient binding of the chemokines, CCL3 and CCL4. Post-translationally, O-glycosylated, but not N-glycosylated. Ser-6 appears to be the major site even if Ser-7 may be also O-glycosylated. Also sialylated glycans present which contribute to chemokine binding. Thr-16 and Ser-17 may also be glycosylated and, if so, with small moieties such as a T-antigen. In terms of processing, palmitoylation in the C-terminal is important for cell surface expression, and to a lesser extent, for HIV entry. Phosphorylation on serine residues in the C-terminal is stimulated by binding CC chemokines especially by APO-RANTES. As to expression, highly expressed in spleen, thymus, in the myeloid cell line THP-1, in the promyeloblastic cell line KG-1a and on CD4+ and CD8+ T-cells. Medium levels in peripheral blood leukocytes and in small intestine. Low levels in ovary and lung.

The protein localises to the cell membrane. In terms of biological role, receptor for a number of inflammatory CC-chemokines including CCL3/MIP-1-alpha, CCL4/MIP-1-beta and RANTES and subsequently transduces a signal by increasing the intracellular calcium ion level. May play a role in the control of granulocytic lineage proliferation or differentiation. Participates in T-lymphocyte migration to the infection site by acting as a chemotactic receptor. (Microbial infection) Acts as a coreceptor (CD4 being the primary receptor) of human immunodeficiency virus-1/HIV-1. This is C-C chemokine receptor type 5 from Homo sapiens (Human).